Consider the following 151-residue polypeptide: Ubiquitin-conjugating enzyme E2 W (151 aa).

Residues 3–151 enclose the UBC core domain; the sequence is SMQKRLQKEL…TKWWYHDDTC (149 aa). The active-site Glycyl thioester intermediate is Cys91.

The protein belongs to the ubiquitin-conjugating enzyme family.

Its subcellular location is the nucleus. The enzyme catalyses S-ubiquitinyl-[E1 ubiquitin-activating enzyme]-L-cysteine + [E2 ubiquitin-conjugating enzyme]-L-cysteine = [E1 ubiquitin-activating enzyme]-L-cysteine + S-ubiquitinyl-[E2 ubiquitin-conjugating enzyme]-L-cysteine.. The catalysed reaction is S-ubiquitinyl-[E1 ubiquitin-activating enzyme]-L-cysteine + [acceptor protein]-N-terminal-amino acid = [E1 ubiquitin-activating enzyme]-L-cysteine + N-terminal-ubiquitinyl-[acceptor protein].. It functions in the pathway protein modification; protein ubiquitination. Accepts ubiquitin from the E1 complex and catalyzes its covalent attachment to other proteins. Catalyzes monoubiquitination. Involved in degradation of misfolded chaperone substrate and DNA repair. The polypeptide is Ubiquitin-conjugating enzyme E2 W (ube2w) (Xenopus tropicalis (Western clawed frog)).